The sequence spans 404 residues: 2,3-bisphosphoglycerate-independent phosphoglycerate mutase (404 aa).

Positions 155-183 (LSDMIGDSDPHREGLPPEKIRPTDPSGDR) are disordered. Residues 162–183 (SDPHREGLPPEKIRPTDPSGDR) are compositionally biased toward basic and acidic residues.

It belongs to the BPG-independent phosphoglycerate mutase family. A-PGAM subfamily.

The enzyme catalyses (2R)-2-phosphoglycerate = (2R)-3-phosphoglycerate. The protein operates within carbohydrate degradation; glycolysis; pyruvate from D-glyceraldehyde 3-phosphate: step 3/5. In terms of biological role, catalyzes the interconversion of 2-phosphoglycerate and 3-phosphoglycerate. The polypeptide is 2,3-bisphosphoglycerate-independent phosphoglycerate mutase (Thermoplasma acidophilum (strain ATCC 25905 / DSM 1728 / JCM 9062 / NBRC 15155 / AMRC-C165)).